The following is a 333-amino-acid chain: Phosphate acyltransferase (333 aa).

This sequence belongs to the PlsX family. Homodimer. Probably interacts with PlsY.

Its subcellular location is the cytoplasm. The catalysed reaction is a fatty acyl-[ACP] + phosphate = an acyl phosphate + holo-[ACP]. Its pathway is lipid metabolism; phospholipid metabolism. Catalyzes the reversible formation of acyl-phosphate (acyl-PO(4)) from acyl-[acyl-carrier-protein] (acyl-ACP). This enzyme utilizes acyl-ACP as fatty acyl donor, but not acyl-CoA. The sequence is that of Phosphate acyltransferase from Clostridium botulinum (strain Alaska E43 / Type E3).